The chain runs to 130 residues: Protein ApaG (130 aa).

Residues 3–127 (RALTRDIEVT…FSLDTPDLRR (125 aa)) form the ApaG domain.

The polypeptide is Protein ApaG (Allorhizobium ampelinum (strain ATCC BAA-846 / DSM 112012 / S4) (Agrobacterium vitis (strain S4))).